A 169-amino-acid polypeptide reads, in one-letter code: Regulator of G-protein signaling rgs-2 (169 aa).

Residues glycine 39–valine 158 enclose the RGS domain.

In terms of processing, may be phosphorylated and activated by egl-4. In terms of tissue distribution, expressed in a subset of neurons including ventral cord and head- and tail-ganglia neurons. Also expressed in non-neuronal cells including pharyngeal and uterine muscles.

Its function is as follows. Weakly inhibits G protein signaling in nervous system, interacting preferentially with the G(O) subfamily member goa-1. In vitro, it acts as a GTPase activator of goa-1. Rgs-1 and rgs-2 redundantly adjust signaling when worms are fed to allow rapid induction of egg-laying behavior. Modulates chemotaxis responses by regulating negatively the sensitivity to quinine in ASH sensory neurons. In Caenorhabditis elegans, this protein is Regulator of G-protein signaling rgs-2 (rgs-2).